Consider the following 158-residue polypeptide: Protein E6 (158 aa).

2 zinc fingers span residues 32–68 and 105–141; these read CVYC…CQSC and CMCC…CRHC. The PDZ-binding domain signature appears at 156–158; it reads TQV.

The protein belongs to the papillomaviridae E6 protein family. Forms homodimers. Interacts with ubiquitin-protein ligase UBE3A/E6-AP; this interaction stimulates UBE3A ubiquitin activity. Interacts with host BAK1.

The protein localises to the host cytoplasm. It localises to the host nucleus. In terms of biological role, plays a major role in the induction and maintenance of cellular transformation. E6 associates with host UBE3A/E6-AP ubiquitin-protein ligase and modulates its activity. Protects host keratinocytes from apoptosis by mediating the degradation of host BAK1. May also inhibit host immune response. The sequence is that of Protein E6 from Homo sapiens (Human).